The chain runs to 176 residues: Adenylyl-sulfate kinase (176 aa).

ATP is bound at residue 12–19; sequence GLSGAGKT. S86 (phosphoserine intermediate) is an active-site residue.

It belongs to the APS kinase family.

The enzyme catalyses adenosine 5'-phosphosulfate + ATP = 3'-phosphoadenylyl sulfate + ADP + H(+). It participates in sulfur metabolism; hydrogen sulfide biosynthesis; sulfite from sulfate: step 2/3. Functionally, catalyzes the synthesis of activated sulfate. In Synechococcus sp. (strain JA-3-3Ab) (Cyanobacteria bacterium Yellowstone A-Prime), this protein is Adenylyl-sulfate kinase.